The primary structure comprises 132 residues: Agouti-signaling protein (132 aa).

The N-terminal stretch at 1–22 (MDVTRLLLATLLVFLCFFTAYS) is a signal peptide. Residue N39 is glycosylated (N-linked (GlcNAc...) asparagine). The interval 62–88 (ISRKEAEKKRSSKKEASMKKVARPRTP) is disordered. Positions 63–79 (SRKEAEKKRSSKKEASM) are enriched in basic and acidic residues. Intrachain disulfides connect C93–C108, C100–C114, C107–C125, C111–C132, and C116–C123. Residues 93–132 (CVATRDSCKPPAPACCDPCASCQCRFFRSACSCRVLSLNC) form the Agouti domain.

It localises to the secreted. In terms of biological role, involved in the regulation of melanogenesis. The binding of ASP to MC1R precludes alpha-MSH initiated signaling and thus blocks production of cAMP, leading to a down-regulation of eumelanogenesis (brown/black pigment) and thus increasing synthesis of pheomelanin (yellow/red pigment). The chain is Agouti-signaling protein (ASIP) from Chlorocebus aethiops (Green monkey).